The chain runs to 633 residues: ATP-dependent RNA helicase mrh4, mitochondrial (633 aa).

Residues 1 to 38 constitute a mitochondrion transit peptide; sequence MNRLGRLSLPLRPQVCLLCQTQATMSSPLAGWQAVRSM. A disordered region spans residues 50–115; it reads MVLSSNVDKS…KQKPDSPLYK (66 aa). The span at 52-63 shows a compositional bias: polar residues; it reads LSSNVDKSSLKQ. The span at 98–109 shows a compositional bias: basic and acidic residues; it reads RSGDSEDDKQKP. Residues 142–175 carry the Q motif motif; it reads SSFDQFPLLPVVRHSISSQALSRTGDIVPTPIQR. Positions 195 to 407 constitute a Helicase ATP-binding domain; it reads SDHEPNFEQY…RKRYPDIRRL (213 aa). 208 to 215 contributes to the ATP binding site; that stretch reads AETGSGKT. A DEAD box motif is present at residues 354 to 357; the sequence is DEAD. The region spanning 458-633 is the Helicase C-terminal domain; that stretch reads FLAQAGPKVK…EGMFRGQALI (176 aa).

It belongs to the DEAD box helicase family. MRH4 subfamily.

Its subcellular location is the mitochondrion. It carries out the reaction ATP + H2O = ADP + phosphate + H(+). ATP-binding RNA helicase involved in mitochondrial RNA metabolism. Required for maintenance of mitochondrial DNA. The protein is ATP-dependent RNA helicase mrh4, mitochondrial (mrh4) of Aspergillus niger (strain ATCC MYA-4892 / CBS 513.88 / FGSC A1513).